Reading from the N-terminus, the 442-residue chain is Septin-8 (442 aa).

Alanine 2 bears the N-acetylalanine mark. Serine 10 is subject to Phosphoserine. Residues 41-307 (QGFSFNILCV…ELYRRCKLEE (267 aa)) form the Septin-type G domain. The tract at residues 51–58 (GETGIGKS) is G1 motif. GTP contacts are provided by residues 51–58 (GETGIGKS), glycine 106, 187–195 (KADTISKSE), glycine 241, and arginine 256. The segment at 103-106 (DAVG) is G3 motif. The segment at 186–189 (AKAD) is G4 motif. Positions 322 to 410 (LQETYEAKRK…RKAAVEALQS (89 aa)) form a coiled coil. Residues 377-391 (HQEEKRKVEEKRREL) show a composition bias toward basic and acidic residues. Residues 377 to 442 (HQEEKRKVEE…WSSIYSVTIP (66 aa)) form a disordered region. Composition is skewed to polar residues over residues 408 to 420 (LQSQ…SQQP) and 432 to 442 (GWSSIYSVTIP).

Belongs to the TRAFAC class TrmE-Era-EngA-EngB-Septin-like GTPase superfamily. Septin GTPase family. As to quaternary structure, septins polymerize into heterooligomeric protein complexes that form filaments, and can associate with cellular membranes, actin filaments and microtubules. GTPase activity is required for filament formation. Interacts with CDK14, SEPTIN4, SEPTIN5 and SEPTIN7. Interacts with VAMP2; the interaction inhibits interaction of VAMP2 with SYP. Interacts with STX1A.

The protein localises to the cytoplasm. It localises to the cytoskeleton. Its subcellular location is the synapse. The protein resides in the cell projection. It is found in the axon. The protein localises to the cytoplasmic vesicle. It localises to the secretory vesicle. Its subcellular location is the synaptic vesicle membrane. The protein resides in the presynapse. Its function is as follows. Filament-forming cytoskeletal GTPase. May play a role in platelet secretion. Seems to participate in the process of SNARE complex formation in synaptic vesicles. This Callithrix jacchus (White-tufted-ear marmoset) protein is Septin-8.